Consider the following 713-residue polypeptide: Polyribonucleotide nucleotidyltransferase (713 aa).

Mg(2+) is bound by residues D488 and D494. One can recognise a KH domain in the interval 555–614 (PQMEIIKVPTDKIRDVIGSGGKVIRGIVDETGAKVNIDDDGTVQISAMDRKSIDAAIKMI). Residues 624–692 (GEIYEGKVVS…ERGKVRLSMK (69 aa)) form the S1 motif domain.

This sequence belongs to the polyribonucleotide nucleotidyltransferase family. The cofactor is Mg(2+).

It localises to the cytoplasm. The catalysed reaction is RNA(n+1) + phosphate = RNA(n) + a ribonucleoside 5'-diphosphate. Involved in mRNA degradation. Catalyzes the phosphorolysis of single-stranded polyribonucleotides processively in the 3'- to 5'-direction. The chain is Polyribonucleotide nucleotidyltransferase from Hyphomonas neptunium (strain ATCC 15444).